The primary structure comprises 165 residues: Probable chemoreceptor glutamine deamidase CheD (165 aa).

It belongs to the CheD family.

It catalyses the reaction L-glutaminyl-[protein] + H2O = L-glutamyl-[protein] + NH4(+). Its function is as follows. Probably deamidates glutamine residues to glutamate on methyl-accepting chemotaxis receptors (MCPs), playing an important role in chemotaxis. This is Probable chemoreceptor glutamine deamidase CheD from Geobacillus kaustophilus (strain HTA426).